The chain runs to 106 residues: Small ribosomal subunit protein uS10 (106 aa).

Belongs to the universal ribosomal protein uS10 family. Part of the 30S ribosomal subunit.

Involved in the binding of tRNA to the ribosomes. The protein is Small ribosomal subunit protein uS10 of Prochlorococcus marinus (strain MIT 9515).